Consider the following 396-residue polypeptide: NAD(P)H oxidoreductase RTN4IP1, mitochondrial (396 aa).

Residues 1 to 40 (MEFLKTCVLRRNACTAVCFWRSKVVQKPSVRRISTTSPRS) constitute a mitochondrion transit peptide. The Enoyl reductase (ER) domain occupies 52 to 393 (GKNEVLRFTQ…RGHARGKTVI (342 aa)). The NADPH site is built by S214, G216, V217, S237, Y255, N276, L300, A341, F343, H386, A387, and R388.

This sequence belongs to the zinc-containing alcohol dehydrogenase family. Quinone oxidoreductase subfamily. Interacts with RTN4, UQCRC1 and UQCRC2. In terms of tissue distribution, widely expressed in mitochondria-enriched tissues. Found in heart, muscle, kidney, liver, brain and placenta.

It localises to the mitochondrion matrix. The protein resides in the mitochondrion outer membrane. The enzyme catalyses a 3-demethylubiquinone + NADH + 2 H(+) = a 3-demethylubiquinol + NAD(+). The catalysed reaction is a 3-demethylubiquinone + NADPH + 2 H(+) = a 3-demethylubiquinol + NADP(+). It carries out the reaction 3-demethylubiquinone-10 + NADH + 2 H(+) = 3-demethylubiquinol-10 + NAD(+). It catalyses the reaction 3-demethylubiquinone-10 + NADPH + 2 H(+) = 3-demethylubiquinol-10 + NADP(+). It participates in cofactor biosynthesis; ubiquinone biosynthesis. Functionally, NAD(P)H oxidoreductase involved in the ubiquinone biosynthetic pathway. Required for the O-methyltransferase activity of COQ3. Able to catalyze the oxidoreduction of 3-demethylubiquinone into 3-demethylubiquinol in vitro. However, it is unclear if 3-demethylubiquinone constitutes a substrate in vivo. May also play a role in the regulation of retinal ganglion cell (RGC) neurite outgrowth, and hence in the development of the inner retina and optic nerve. Appears to be a potent inhibitor of regeneration following spinal cord injury. The sequence is that of NAD(P)H oxidoreductase RTN4IP1, mitochondrial from Homo sapiens (Human).